An 83-amino-acid polypeptide reads, in one-letter code: Mu-conotoxin-like PnMKLT1-014 (83 aa).

The N-terminal stretch at 1–22 (MNLTCMMIVAVLFLTAWTFVMA) is a signal peptide. A propeptide spanning residues 23–50 (DDSNNGLANLFSKSRYEMEDPEPSKLEK) is cleaved from the precursor. 3 disulfides stabilise this stretch: Cys-54–Cys-72, Cys-61–Cys-77, and Cys-71–Cys-82.

Belongs to the conotoxin O1 superfamily. As to expression, expressed by the venom duct.

It localises to the secreted. Functionally, mu-conotoxins block voltage-gated sodium channels (Nav). The polypeptide is Mu-conotoxin-like PnMKLT1-014 (Conus pennaceus (Feathered cone)).